We begin with the raw amino-acid sequence, 66 residues long: UPF0337 protein SpyM3_1723 (66 aa).

Basic and acidic residues predominate over residues 1–10; it reads MSEEKLKSKI. Positions 1 to 23 are disordered; that stretch reads MSEEKLKSKIEQASGGLKEGAGK.

It belongs to the UPF0337 (CsbD) family.

This chain is UPF0337 protein SpyM3_1723, found in Streptococcus pyogenes serotype M3 (strain ATCC BAA-595 / MGAS315).